The sequence spans 88 residues: Phosphocarrier protein HPr (88 aa).

The HPr domain occupies 1–88; sequence MASKEFHIVV…ETMTKEGLAE (88 aa). His15 acts as the Pros-phosphohistidine intermediate in catalysis. Ser46 carries the post-translational modification Phosphoserine; by HPrK/P.

It belongs to the HPr family.

The protein resides in the cytoplasm. Phosphorylation on Ser-46 inhibits the phosphoryl transfer from enzyme I to HPr. General (non sugar-specific) component of the phosphoenolpyruvate-dependent sugar phosphotransferase system (sugar PTS). This major carbohydrate active-transport system catalyzes the phosphorylation of incoming sugar substrates concomitantly with their translocation across the cell membrane. The phosphoryl group from phosphoenolpyruvate (PEP) is transferred to the phosphoryl carrier protein HPr by enzyme I. Phospho-HPr then transfers it to the PTS EIIA domain. Functionally, P-Ser-HPr interacts with the catabolite control protein A (CcpA), forming a complex that binds to DNA at the catabolite response elements cre, operator sites preceding a large number of catabolite-regulated genes. Thus, P-Ser-HPr is a corepressor in carbon catabolite repression (CCR), a mechanism that allows bacteria to coordinate and optimize the utilization of available carbon sources. P-Ser-HPr also plays a role in inducer exclusion, in which it probably interacts with several non-PTS permeases and inhibits their transport activity. The sequence is that of Phosphocarrier protein HPr (ptsH) from Lactococcus lactis subsp. lactis (strain IL1403) (Streptococcus lactis).